A 408-amino-acid polypeptide reads, in one-letter code: Dihydrolipoyllysine-residue acetyltransferase component of pyruvate dehydrogenase complex (408 aa).

One can recognise a Lipoyl-binding domain in the interval 2–78; that stretch reads PIKILMPALS…PVNSLIAVLS (77 aa). Lys-43 bears the N6-lipoyllysine mark. The Peripheral subunit-binding (PSBD) domain occupies 128–165; the sequence is FASPLAKRLAKIGDIRLENVQGSGPHGRIVKQDILSYD. The active site involves His-381.

The protein belongs to the 2-oxoacid dehydrogenase family. Forms a 24-polypeptide structural core with octahedral symmetry. (R)-lipoate serves as cofactor.

It carries out the reaction N(6)-[(R)-dihydrolipoyl]-L-lysyl-[protein] + acetyl-CoA = N(6)-[(R)-S(8)-acetyldihydrolipoyl]-L-lysyl-[protein] + CoA. Its function is as follows. The pyruvate dehydrogenase complex catalyzes the overall conversion of pyruvate to acetyl-CoA and CO(2). It contains multiple copies of three enzymatic components: pyruvate dehydrogenase (E1), dihydrolipoamide acetyltransferase (E2) and lipoamide dehydrogenase (E3). The protein is Dihydrolipoyllysine-residue acetyltransferase component of pyruvate dehydrogenase complex (pdhC) of Rickettsia prowazekii (strain Madrid E).